The sequence spans 109 residues: Large ribosomal subunit protein P1 (109 aa).

The interval 90 to 109 is disordered; that stretch reads AAAKKEEEEEDDDMGFGLFD.

It belongs to the eukaryotic ribosomal protein P1/P2 family. In terms of assembly, P1 and P2 exist as dimers at the large ribosomal subunit.

Plays an important role in the elongation step of protein synthesis. The polypeptide is Large ribosomal subunit protein P1 (Trypanosoma cruzi).